The following is a 277-amino-acid chain: Putative pyruvate, phosphate dikinase regulatory protein (277 aa).

ADP is bound at residue 151–158 (GISRTSKT).

This sequence belongs to the pyruvate, phosphate/water dikinase regulatory protein family. PDRP subfamily.

It carries out the reaction N(tele)-phospho-L-histidyl/L-threonyl-[pyruvate, phosphate dikinase] + ADP = N(tele)-phospho-L-histidyl/O-phospho-L-threonyl-[pyruvate, phosphate dikinase] + AMP + H(+). The catalysed reaction is N(tele)-phospho-L-histidyl/O-phospho-L-threonyl-[pyruvate, phosphate dikinase] + phosphate + H(+) = N(tele)-phospho-L-histidyl/L-threonyl-[pyruvate, phosphate dikinase] + diphosphate. Bifunctional serine/threonine kinase and phosphorylase involved in the regulation of the pyruvate, phosphate dikinase (PPDK) by catalyzing its phosphorylation/dephosphorylation. The sequence is that of Putative pyruvate, phosphate dikinase regulatory protein from Alkaliphilus metalliredigens (strain QYMF).